We begin with the raw amino-acid sequence, 243 residues long: Small ribosomal subunit protein uS3 (243 aa).

Residues 22 to 93 enclose the KH type-2 domain; sequence LNEFLTRELA…SVELYAEKVA (72 aa). Residues 195-243 form a disordered region; the sequence is QQGKNGPKKPQPDHILVTEPKDEPAPLEPTSDIRSLAPAPLPQPVAAVA.

Belongs to the universal ribosomal protein uS3 family.

In Manduca sexta (Tobacco hawkmoth), this protein is Small ribosomal subunit protein uS3 (RpS3).